The chain runs to 305 residues: Epoxyqueuosine reductase (305 aa).

The active-site Proton donor is the aspartate 128. In terms of domain architecture, 4Fe-4S ferredoxin-type spans 170–202 (LSLTSDTPHAKYCGTCRKCLDICPTKAIVHPFV). The [4Fe-4S] cluster site is built by cysteine 182, cysteine 185, cysteine 188, cysteine 192, cysteine 208, cysteine 236, cysteine 239, and cysteine 243.

Belongs to the QueG family. As to quaternary structure, monomer. The cofactor is cob(II)alamin. [4Fe-4S] cluster serves as cofactor.

It localises to the cytoplasm. It carries out the reaction epoxyqueuosine(34) in tRNA + AH2 = queuosine(34) in tRNA + A + H2O. The protein operates within tRNA modification; tRNA-queuosine biosynthesis. In terms of biological role, catalyzes the conversion of epoxyqueuosine (oQ) to queuosine (Q), which is a hypermodified base found in the wobble positions of tRNA(Asp), tRNA(Asn), tRNA(His) and tRNA(Tyr). The chain is Epoxyqueuosine reductase from Atelocyanobacterium thalassa (isolate ALOHA).